The primary structure comprises 530 residues: Pre-mRNA-splicing factor PRP9 (530 aa).

The Matrin-type 1 zinc-finger motif lies at 280 to 310; sequence IYCPFCSRWFKTSSVFESHLVGKIHKKNESK. The segment at 367-388 is disordered; it reads DSTEKEGAEQVDGEQRDGQLQE. Positions 368–388 are enriched in basic and acidic residues; it reads STEKEGAEQVDGEQRDGQLQE. Residues 421 to 452 form a Matrin-type 2 zinc finger; it reads YRCEICSNKVYNGRRTFERHFNEERHIYHLRC. The interval 488 to 516 is disordered; it reads AVPPKPNPSQLKVPTELELEEEDEEGNVM. Positions 504-513 are enriched in acidic residues; it reads LELEEEDEEG.

The protein belongs to the SF3A3 family. In terms of assembly, belongs to the CWC complex (or CEF1-associated complex), a spliceosome sub-complex reminiscent of a late-stage spliceosome composed of the U2, U5 and U6 snRNAs and at least BUD13, BUD31, BRR2, CDC40, CEF1, CLF1, CUS1, CWC2, CWC15, CWC21, CWC22, CWC23, CWC24, CWC25, CWC27, ECM2, HSH155, IST3, ISY1, LEA1, MSL1, NTC20, PRP8, PRP9, PRP11, PRP19, PRP21, PRP22, PRP45, PRP46, SLU7, SMB1, SMD1, SMD2, SMD3, SMX2, SMX3, SNT309, SNU114, SPP2, SYF1, SYF2, RSE1 and YJU2.

It localises to the nucleus. In terms of biological role, mRNA splicing factors, PRP9, PRP11, and PRP21, are necessary for binding of the U2 snRNP to the pre-mRNA in an early step of spliceosome assembly. This chain is Pre-mRNA-splicing factor PRP9 (PRP9), found in Saccharomyces cerevisiae (strain ATCC 204508 / S288c) (Baker's yeast).